Consider the following 2729-residue polypeptide: 3-methylorcinaldehyde synthase (2729 aa).

An N-terminal acylcarrier protein transacylase domain (SAT) region spans residues 99 to 238 (LPAALLIPLA…GTISNLTRQL (140 aa)). The segment covering 361-373 (SLASTVDINSGNG) has biased composition (polar residues). The tract at residues 361–391 (SLASTVDINSGNGKTRRVKPADAQSSANSTH) is disordered. The region spanning 397 to 828 (DTDIAIVGMS…GSNASAVLVQ (432 aa)) is the Ketosynthase family 3 (KS3) domain. Active-site for beta-ketoacyl synthase activity residues include Cys-571, His-706, and His-748. Residues 942–1230 (FGGQVSCFVG…FLEAGTNSSV (289 aa)) are malonyl-CoA:ACP transacylase (MAT) domain. Catalysis depends on Ser-1029, which acts as the For acyl/malonyl transferase activity. The interval 1345–1479 (ETILTFHSSD…GTVAFKNPGD (135 aa)) is N-terminal hotdog fold. In terms of domain architecture, PKS/mFAS DH spans 1345–1669 (ETILTFHSSD…YVKIARPSME (325 aa)). Residues 1374-1665 (KQLLRGHMTL…LGIAYVKIAR (292 aa)) are product template (PT) domain. His-1380 (proton acceptor; for dehydratase activity) is an active-site residue. Positions 1513 to 1669 (DEMLGNQSIY…YVKIARPSME (157 aa)) are C-terminal hotdog fold. Catalysis depends on Asp-1575, which acts as the Proton donor; for dehydratase activity. Positions 1682-1701 (AGGKTTPQTATKPAAAPVVA) are enriched in low complexity. The tract at residues 1682–1726 (AGGKTTPQTATKPAAAPVVADHTPRTTESASTVNGVNLDDRKPEG) is disordered. Polar residues predominate over residues 1707 to 1716 (TTESASTVNG). In terms of domain architecture, Carrier spans 1750–1824 (QDMIARVKAV…GLLQCVAGAL (75 aa)). The residue at position 1784 (Ser-1784) is an O-(pantetheine 4'-phosphoryl)serine. The segment covering 1835 to 1868 (TLTASSDSGINSAKSSILSGTSTSTSTGTTDTGS) has biased composition (low complexity). Residues 1835-1874 (TLTASSDSGINSAKSSILSGTSTSTSTGTTDTGSDVGQSM) are disordered. Positions 2086 to 2254 (EINPLRIMET…GYVDWTEGMT (169 aa)) are methyltransferase (C-MeT) domain. The interval 2344–2599 (ITGGTGGLGA…GWTPADYVAR (256 aa)) is reductase (R) domain.

It participates in secondary metabolite biosynthesis; terpenoid biosynthesis. Non-reducing polyketide synthase; part of the gene cluster that mediates the biosynthesis of xenovulene A, an unusual meroterpenoid that has potent inhibitory effects on the human gamma-aminobutyrate A (GABAA) benzodiazepine receptor. The first step of xenovulene A biosynthesis is the biosynthesis of 3-methylorcinaldehyde performed by the non-reducing polyketide synthase aspks1. The salicylate hydroxylase asL1 then catalyzes the oxidative dearomatization of 3-methylorcinaldehyde to yield a dearomatized hydroxycyclohexadione. The 2-oxoglutarate-dependent dioxygenase asL3 further catalyzes the oxidative ring expansion to provide the first tropolone metabolite. The cytochrome P450 monooxygenase asR2 allows the synthesis of tropolone hemiacetal. In parallel, a previously unrecognised class of terpene cyclase, asR6, produces alpha-humulene from farnesylpyrophosphate (FPP). The putative Diels-Alderase asR5 probably catalyzes the formation of the tropolone-humulene skeleton by linking humulene and the polyketide moiety. Oxidative-ring contractions catalyzed by asL4 and asL6 then processively remove carbon atoms from the polyketide to yield xenovulene A. This Sarocladium schorii (Acremonium strictum (strain IMI 501407)) protein is 3-methylorcinaldehyde synthase.